A 417-amino-acid chain; its full sequence is Tyrosine aminotransferase (417 aa).

Position 249 is an N6-(pyridoxal phosphate)lysine (Lys-249).

This sequence belongs to the class-I pyridoxal-phosphate-dependent aminotransferase family. As to quaternary structure, homodimer. Requires pyridoxal 5'-phosphate as cofactor.

It carries out the reaction L-tyrosine + 2-oxoglutarate = 3-(4-hydroxyphenyl)pyruvate + L-glutamate. It participates in amino-acid degradation; L-phenylalanine degradation; acetoacetate and fumarate from L-phenylalanine: step 2/6. Its function is as follows. Transaminase involved in tyrosine breakdown. Converts tyrosine to p-hydroxyphenylpyruvate. Has much lower affinity and transaminase activity towards phenylalanine. In Dictyostelium discoideum (Social amoeba), this protein is Tyrosine aminotransferase (tat).